The sequence spans 338 residues: Nucleoid-associated protein CGSHiGG_07705 (338 aa).

The protein belongs to the YejK family.

It is found in the cytoplasm. The protein localises to the nucleoid. In Haemophilus influenzae (strain PittGG), this protein is Nucleoid-associated protein CGSHiGG_07705.